A 610-amino-acid chain; its full sequence is Membrane protein insertase YidC (610 aa).

A helical transmembrane segment spans residues 7–27 (FFITIALSILILALWQVFYLG). A disordered region spans residues 36–82 (QARIEEQQRQAQQAAQNRQASSSTGDTPQMPANPDSIPGQGDTKAAG). Residues 44 to 55 (RQAQQAAQNRQA) show a composition bias toward low complexity. Helical transmembrane passes span 358 to 378 (FDLLIDWGWFYFITKPMFYLI), 387 to 407 (NFGVAILVVTVLLKALFFPLA), 458 to 478 (WPVLVQIPVFFALYKVLYVTI), 510 to 530 (TVPHFLMIGVWPIIMGITMFL), and 546 to 566 (IFTWMPIIFTFMLASFPAGLV).

This sequence belongs to the OXA1/ALB3/YidC family. Type 1 subfamily. As to quaternary structure, interacts with the Sec translocase complex via SecD. Specifically interacts with transmembrane segments of nascent integral membrane proteins during membrane integration.

It is found in the cell inner membrane. Functionally, required for the insertion and/or proper folding and/or complex formation of integral membrane proteins into the membrane. Involved in integration of membrane proteins that insert both dependently and independently of the Sec translocase complex, as well as at least some lipoproteins. Aids folding of multispanning membrane proteins. This Brucella suis biovar 1 (strain 1330) protein is Membrane protein insertase YidC.